A 397-amino-acid chain; its full sequence is Sexual differentiation process protein isp7 (397 aa).

The region spanning Pro-255–Gly-353 is the Fe2OG dioxygenase domain.

The protein belongs to the iron/ascorbate-dependent oxidoreductase family.

This Schizosaccharomyces pombe (strain 972 / ATCC 24843) (Fission yeast) protein is Sexual differentiation process protein isp7 (isp7).